The chain runs to 127 residues: Aspartate 1-decarboxylase (127 aa).

Serine 25 acts as the Schiff-base intermediate with substrate; via pyruvic acid in catalysis. Serine 25 bears the Pyruvic acid (Ser) mark. Threonine 57 provides a ligand contact to substrate. Tyrosine 58 functions as the Proton donor in the catalytic mechanism. Glycine 73–alanine 75 is a binding site for substrate.

Belongs to the PanD family. In terms of assembly, heterooctamer of four alpha and four beta subunits. Requires pyruvate as cofactor. Post-translationally, is synthesized initially as an inactive proenzyme, which is activated by self-cleavage at a specific serine bond to produce a beta-subunit with a hydroxyl group at its C-terminus and an alpha-subunit with a pyruvoyl group at its N-terminus.

The protein localises to the cytoplasm. The enzyme catalyses L-aspartate + H(+) = beta-alanine + CO2. Its pathway is cofactor biosynthesis; (R)-pantothenate biosynthesis; beta-alanine from L-aspartate: step 1/1. In terms of biological role, catalyzes the pyruvoyl-dependent decarboxylation of aspartate to produce beta-alanine. This chain is Aspartate 1-decarboxylase, found in Bacillus cereus (strain G9842).